The primary structure comprises 316 residues: ATP synthase gamma chain (316 aa).

It belongs to the ATPase gamma chain family. In terms of assembly, F-type ATPases have 2 components, CF(1) - the catalytic core - and CF(0) - the membrane proton channel. CF(1) has five subunits: alpha(3), beta(3), gamma(1), delta(1), epsilon(1). CF(0) has three main subunits: a, b and c.

It localises to the cellular thylakoid membrane. In terms of biological role, produces ATP from ADP in the presence of a proton gradient across the membrane. The gamma chain is believed to be important in regulating ATPase activity and the flow of protons through the CF(0) complex. This is ATP synthase gamma chain from Prochlorococcus marinus subsp. pastoris (strain CCMP1986 / NIES-2087 / MED4).